Consider the following 216-residue polypeptide: MRVAIIDYGSGNLRSATKAFERAAHESGISAEIDLTCDAQRVASADRIVLPGVGAYADCRRGLDAAPGMVEALNDTVLKKARPFLGICVGMQLMSERGLEKTVTNGLGWIAGDVREMVPSDASLKIPQIGWNRIHVKHSHPIFDGIPTGDDGLHAYFVHSYMLDAKNASDVLAVTDYGGDVTAAVGRDNMVGTQFHPEKSQLLGLSLIANFLKWKP.

Residues 2–216 (RVAIIDYGSG…LIANFLKWKP (215 aa)) form the Glutamine amidotransferase type-1 domain. The active-site Nucleophile is the cysteine 88. Active-site residues include histidine 196 and glutamate 198.

Heterodimer of HisH and HisF.

It localises to the cytoplasm. The enzyme catalyses 5-[(5-phospho-1-deoxy-D-ribulos-1-ylimino)methylamino]-1-(5-phospho-beta-D-ribosyl)imidazole-4-carboxamide + L-glutamine = D-erythro-1-(imidazol-4-yl)glycerol 3-phosphate + 5-amino-1-(5-phospho-beta-D-ribosyl)imidazole-4-carboxamide + L-glutamate + H(+). It carries out the reaction L-glutamine + H2O = L-glutamate + NH4(+). It functions in the pathway amino-acid biosynthesis; L-histidine biosynthesis; L-histidine from 5-phospho-alpha-D-ribose 1-diphosphate: step 5/9. Functionally, IGPS catalyzes the conversion of PRFAR and glutamine to IGP, AICAR and glutamate. The HisH subunit catalyzes the hydrolysis of glutamine to glutamate and ammonia as part of the synthesis of IGP and AICAR. The resulting ammonia molecule is channeled to the active site of HisF. The sequence is that of Imidazole glycerol phosphate synthase subunit HisH from Brucella abortus biovar 1 (strain 9-941).